The sequence spans 326 residues: Adenosine receptor A1 (326 aa).

At 1 to 10 (MPPYISAFQA) the chain is on the extracellular side. Residues 11 to 33 (AYIGIEVLIALVSVPGNVLVIWA) traverse the membrane as a helical segment. At 34-46 (VKVNQALRDATFC) the chain is on the cytoplasmic side. Residues 47 to 69 (FIVSLAVADVAVGALVIPLAILI) traverse the membrane as a helical segment. The Extracellular segment spans residues 70 to 80 (NIGPQTYFHTC). Residues cysteine 80 and cysteine 169 are joined by a disulfide bond. The chain crosses the membrane as a helical span at residues 81–102 (LMVACPVLILTQSSILALLAIA). Residues 103-123 (VDRYLRVKIPLRYKTVVTQRR) are Cytoplasmic-facing. Residues 124–146 (AAVAIAGCWILSLVVGLTPMFGW) traverse the membrane as a helical segment. Topologically, residues 147–176 (NNLSVVEQDWRANGSVGEPVIKCEFEKVIS) are extracellular. N-linked (GlcNAc...) asparagine glycans are attached at residues asparagine 148 and asparagine 159. The helical transmembrane segment at 177 to 201 (MEYMVYFNFFVWVLPPLLLMVLIYL) threads the bilayer. The Cytoplasmic segment spans residues 202 to 235 (EVFYLIRKQLNKKVSASSGDPQKYYGKELKIAKS). A helical membrane pass occupies residues 236–259 (LALILFLFALSWLPLHILNCITLF). The Extracellular segment spans residues 260 to 267 (CPTCQKPS). Residues 268-292 (ILIYIAIFLTHGNSAMNPIVYAFRI) traverse the membrane as a helical segment. The Cytoplasmic segment spans residues 293 to 326 (HKFRVTFLKIWNDHFRCQPKPPIDEDLPEEKAED). Residue cysteine 309 is the site of S-palmitoyl cysteine attachment.

The protein belongs to the G-protein coupled receptor 1 family. Widely expressed in brain and spinal cord.

The protein resides in the cell membrane. Functionally, receptor for adenosine. The activity of this receptor is mediated by G proteins which inhibit adenylyl cyclase. This is Adenosine receptor A1 (Adora1) from Rattus norvegicus (Rat).